The following is a 65-amino-acid chain: Large ribosomal subunit protein bL35 (65 aa).

Positions M1–S51 are disordered. Basic residues-rich tracts occupy residues A10–R24 and L33–L44.

It belongs to the bacterial ribosomal protein bL35 family.

The polypeptide is Large ribosomal subunit protein bL35 (Pelobacter propionicus (strain DSM 2379 / NBRC 103807 / OttBd1)).